Reading from the N-terminus, the 299-residue chain is ATP phosphoribosyltransferase (299 aa).

Belongs to the ATP phosphoribosyltransferase family. Long subfamily. It depends on Mg(2+) as a cofactor.

The protein resides in the cytoplasm. It catalyses the reaction 1-(5-phospho-beta-D-ribosyl)-ATP + diphosphate = 5-phospho-alpha-D-ribose 1-diphosphate + ATP. Its pathway is amino-acid biosynthesis; L-histidine biosynthesis; L-histidine from 5-phospho-alpha-D-ribose 1-diphosphate: step 1/9. Feedback inhibited by histidine. Functionally, catalyzes the condensation of ATP and 5-phosphoribose 1-diphosphate to form N'-(5'-phosphoribosyl)-ATP (PR-ATP). Has a crucial role in the pathway because the rate of histidine biosynthesis seems to be controlled primarily by regulation of HisG enzymatic activity. The polypeptide is ATP phosphoribosyltransferase (Campylobacter lari (strain RM2100 / D67 / ATCC BAA-1060)).